The sequence spans 812 residues: Outer membrane usher protein FaeD (812 aa).

The signal sequence occupies residues 1-35 (MKKYVTTKSVQPVAFRLTTLSLVMSAVLGSASVIA). Cysteine 793 and cysteine 811 are oxidised to a cystine.

Belongs to the fimbrial export usher family.

Its subcellular location is the cell outer membrane. In terms of biological role, involved in the export and assembly of K88ab fimbrial subunits across the outer membrane. The protein is Outer membrane usher protein FaeD (faeD) of Escherichia coli.